The chain runs to 372 residues: Tryptophan--tRNA ligase (372 aa).

Residues 79 to 87 carry the 'HIGH' region motif; it reads PSGKFHFGH. The interval 247–268 is disordered; it reads KLQPGLDGRKMSSSRPDSTIFL. The 'KMSKS' region signature appears at 256–260; sequence KMSSS. Residues 257–267 are compositionally biased toward polar residues; the sequence is MSSSRPDSTIF.

This sequence belongs to the class-I aminoacyl-tRNA synthetase family.

The protein resides in the cytoplasm. It carries out the reaction tRNA(Trp) + L-tryptophan + ATP = L-tryptophyl-tRNA(Trp) + AMP + diphosphate + H(+). The polypeptide is Tryptophan--tRNA ligase (Aeropyrum pernix (strain ATCC 700893 / DSM 11879 / JCM 9820 / NBRC 100138 / K1)).